The following is a 76-amino-acid chain: ATP synthase subunit c (76 aa).

2 helical membrane passes run G5 to I25 and A54 to L74.

It belongs to the ATPase C chain family. In terms of assembly, F-type ATPases have 2 components, F(1) - the catalytic core - and F(0) - the membrane proton channel. F(1) has five subunits: alpha(3), beta(3), gamma(1), delta(1), epsilon(1). F(0) has three main subunits: a(1), b(2) and c(10-14). The alpha and beta chains form an alternating ring which encloses part of the gamma chain. F(1) is attached to F(0) by a central stalk formed by the gamma and epsilon chains, while a peripheral stalk is formed by the delta and b chains.

It localises to the cell membrane. Functionally, f(1)F(0) ATP synthase produces ATP from ADP in the presence of a proton or sodium gradient. F-type ATPases consist of two structural domains, F(1) containing the extramembraneous catalytic core and F(0) containing the membrane proton channel, linked together by a central stalk and a peripheral stalk. During catalysis, ATP synthesis in the catalytic domain of F(1) is coupled via a rotary mechanism of the central stalk subunits to proton translocation. Its function is as follows. Key component of the F(0) channel; it plays a direct role in translocation across the membrane. A homomeric c-ring of between 10-14 subunits forms the central stalk rotor element with the F(1) delta and epsilon subunits. This is ATP synthase subunit c from Ruminiclostridium cellulolyticum (strain ATCC 35319 / DSM 5812 / JCM 6584 / H10) (Clostridium cellulolyticum).